Here is a 155-residue protein sequence, read N- to C-terminus: Ribosome maturation factor RimP (155 aa).

The protein belongs to the RimP family.

The protein localises to the cytoplasm. Functionally, required for maturation of 30S ribosomal subunits. This Macrococcus caseolyticus (strain JCSC5402) (Macrococcoides caseolyticum) protein is Ribosome maturation factor RimP.